The chain runs to 159 residues: Cyclic pyranopterin monophosphate synthase (159 aa).

Residues 75–77 (MCH) and 113–114 (ME) contribute to the substrate site. Residue Asp128 is part of the active site.

This sequence belongs to the MoaC family. Homohexamer; trimer of dimers.

The enzyme catalyses (8S)-3',8-cyclo-7,8-dihydroguanosine 5'-triphosphate = cyclic pyranopterin phosphate + diphosphate. It functions in the pathway cofactor biosynthesis; molybdopterin biosynthesis. Catalyzes the conversion of (8S)-3',8-cyclo-7,8-dihydroguanosine 5'-triphosphate to cyclic pyranopterin monophosphate (cPMP). This is Cyclic pyranopterin monophosphate synthase from Desulfatibacillum aliphaticivorans.